Reading from the N-terminus, the 291-residue chain is B-lymphocyte antigen CD20 (291 aa).

Topologically, residues 1-44 (MSGPFPAEPTKGPLAMQPAPKVNLKRTSSLVGPTQSFFMRESKA) are cytoplasmic. S29 is modified (phosphoserine). Residues 45–65 (LGAVQIMNGLFHITLGGLLMI) form a helical membrane-spanning segment. Residues 66–68 (PTG) lie on the Extracellular side of the membrane. A helical membrane pass occupies residues 69-89 (VFAPICLSVWYPLWGGIMYII). Over 90–111 (SGSLLAAAAEKTSRKSLVKAKV) the chain is Cytoplasmic. Residues 112-132 (IMSSLSLFAAISGIILSIMDI) form a helical membrane-spanning segment. Topologically, residues 133–182 (LNMTLSHFLKMRRLELIQTSKPYVDIYDCEPSNSSEKNSPSTQYCNSIQS) are extracellular. A helical membrane pass occupies residues 183-203 (VFLGILSAMLISAFFQKLVTA). Residues 204-291 (GIVENEWKRM…SLPVENEIAP (88 aa)) are Cytoplasmic-facing. C214 is lipidated: S-palmitoyl cysteine. The residue at position 219 (S219) is a Phosphoserine. T233 carries the phosphothreonine modification. Residues 261 to 270 (VQEEEEEEAE) are compositionally biased toward acidic residues. The tract at residues 261 to 291 (VQEEEEEEAEINFPAPPQEQESLPVENEIAP) is disordered.

This sequence belongs to the MS4A family. In terms of assembly, forms homotetramers. Interacts with the heavy and light chains of cell surface IgM, the antigen-binding components of the BCR. In terms of processing, phosphorylated.

The protein localises to the cell membrane. Functionally, B-lymphocyte-specific membrane protein that plays a role in the regulation of cellular calcium influx necessary for the development, differentiation, and activation of B-lymphocytes. Functions as a store-operated calcium (SOC) channel component promoting calcium influx after activation by the B-cell receptor/BCR. The protein is B-lymphocyte antigen CD20 (Ms4a1) of Mus musculus (Mouse).